Consider the following 90-residue polypeptide: Small ribosomal subunit protein uS17 (90 aa).

This sequence belongs to the universal ribosomal protein uS17 family. Part of the 30S ribosomal subunit.

Functionally, one of the primary rRNA binding proteins, it binds specifically to the 5'-end of 16S ribosomal RNA. The sequence is that of Small ribosomal subunit protein uS17 from Methylobacillus flagellatus (strain ATCC 51484 / DSM 6875 / VKM B-1610 / KT).